We begin with the raw amino-acid sequence, 93 residues long: Integration host factor subunit beta (93 aa).

The protein belongs to the bacterial histone-like protein family. Heterodimer of an alpha and a beta chain.

This protein is one of the two subunits of integration host factor, a specific DNA-binding protein that functions in genetic recombination as well as in transcriptional and translational control. The protein is Integration host factor subunit beta of Cereibacter sphaeroides (strain KD131 / KCTC 12085) (Rhodobacter sphaeroides).